The chain runs to 248 residues: Probable transcriptional regulatory protein Syncc9902_0542 (248 aa).

Belongs to the TACO1 family.

The protein resides in the cytoplasm. The sequence is that of Probable transcriptional regulatory protein Syncc9902_0542 from Synechococcus sp. (strain CC9902).